Consider the following 96-residue polypeptide: MQALIEISDKQYLVQPGDELFIPRQQAEVGDVLDIKPMVAIDQENTTLQPSGNVQVKVLEHLKGEKVVVFKKKRRKRYQCRNGHRQQMTKVEVLSM.

Belongs to the bacterial ribosomal protein bL21 family. Part of the 50S ribosomal subunit. Contacts protein L20.

This protein binds to 23S rRNA in the presence of protein L20. The sequence is that of Large ribosomal subunit protein bL21 from Prosthecochloris aestuarii (strain DSM 271 / SK 413).